The primary structure comprises 81 residues: Cytochrome b559 subunit alpha (81 aa).

A helical transmembrane segment spans residues 21–35; that stretch reads IIHSITIPMLFIAGW. A heme-binding site is contributed by His-23.

Belongs to the PsbE/PsbF family. In terms of assembly, heterodimer of an alpha subunit and a beta subunit. PSII is composed of 1 copy each of membrane proteins PsbA, PsbB, PsbC, PsbD, PsbE, PsbF, PsbH, PsbI, PsbJ, PsbK, PsbL, PsbM, PsbT, PsbX, PsbY, PsbZ, Psb30/Ycf12, peripheral proteins PsbO, CyanoQ (PsbQ), PsbU, PsbV and a large number of cofactors. It forms dimeric complexes. Heme b serves as cofactor.

The protein resides in the cellular thylakoid membrane. Its function is as follows. This b-type cytochrome is tightly associated with the reaction center of photosystem II (PSII). PSII is a light-driven water:plastoquinone oxidoreductase that uses light energy to abstract electrons from H(2)O, generating O(2) and a proton gradient subsequently used for ATP formation. It consists of a core antenna complex that captures photons, and an electron transfer chain that converts photonic excitation into a charge separation. The sequence is that of Cytochrome b559 subunit alpha from Microcystis aeruginosa (strain NIES-843 / IAM M-2473).